The sequence spans 921 residues: Isoleucine--tRNA ligase (921 aa).

A 'HIGH' region motif is present at residues Pro-57 to His-67. Glu-552 provides a ligand contact to L-isoleucyl-5'-AMP. The 'KMSKS' region signature appears at Lys-593–Ser-597. Lys-596 is an ATP binding site. Cys-888, Cys-891, Cys-908, and Cys-911 together coordinate Zn(2+).

Belongs to the class-I aminoacyl-tRNA synthetase family. IleS type 1 subfamily. Monomer. The cofactor is Zn(2+).

The protein resides in the cytoplasm. The catalysed reaction is tRNA(Ile) + L-isoleucine + ATP = L-isoleucyl-tRNA(Ile) + AMP + diphosphate. Functionally, catalyzes the attachment of isoleucine to tRNA(Ile). As IleRS can inadvertently accommodate and process structurally similar amino acids such as valine, to avoid such errors it has two additional distinct tRNA(Ile)-dependent editing activities. One activity is designated as 'pretransfer' editing and involves the hydrolysis of activated Val-AMP. The other activity is designated 'posttransfer' editing and involves deacylation of mischarged Val-tRNA(Ile). This is Isoleucine--tRNA ligase from Bacillus cereus (strain G9842).